A 423-amino-acid chain; its full sequence is Aspartic protease-like protein pytH (423 aa).

A signal peptide spans 1-16 (MWLSVALLTLLDGALA). The Peptidase A1 domain occupies 38–416 (TTDAIQIGTP…DFDKLRVGLA (379 aa)). D56 is an active-site residue. N88, N97, N168, N196, N231, and N279 each carry an N-linked (GlcNAc...) asparagine glycan. D291 is an active-site residue. N-linked (GlcNAc...) asparagine glycosylation is present at N330. A disulfide bridge links C338 with C377.

This sequence belongs to the peptidase A1 family.

The protein operates within secondary metabolite biosynthesis. In terms of biological role, aspartic protease-like protein; part of the gene cluster that mediates the biosynthesis of pyranterreones, a family of antioxidative compounds. The first step of pyranonigrins biosynthesis is performed by the hybrid PKS-NRPS synthetase pytA that condenses 4 malonyl-CoA units ato the acetyl starter unit by the modular PKS of pytA. The acyl chain is then connected to an L-serine through the amide bond by the modular NRPS of pytA. A tetramic acid is formed and released from the PKS-NRPS pytA to give pyranterreone 5 with the help of the thioesterase pytI. Pyranterreone 5 could be methylated by pytC to afford pyranterreone 6. Both pyranterreones 5 and 6 are subsequently oxidized by the FAD-linked oxidoreductase pytB and the cytochrome P450 monooxygenase pytD to form the fused gamma-pyrone core, resulting in pyranterreones 7 and 11, respectively. The hydroxy group at C-8 of pyranterreones 7 and 11 are dehydrated by the aspartyl protease pytH to form a delta-7 double bond to give pyranterreones 3 and 1, 2 accordingly. The exo-methylene of pyranterreone 3 could be reduced into a pendant methyl by reductase pytE to provide pyranterreone 4, also known as cordylactam. Pyranterreone 4 can be reconverted to pyranterreone 3 through pytB-catalyzed dehydrogenation or further oxidized to pyranterreones 9 and 10. In Aspergillus terreus (strain NIH 2624 / FGSC A1156), this protein is Aspartic protease-like protein pytH.